Here is a 95-residue protein sequence, read N- to C-terminus: Lipolysis-activating peptide 1-beta chain (95 aa).

An N-terminal signal peptide occupies residues 1–22; that stretch reads MISVQVIFIAFISIIAFSMVCG. The 69-residue stretch at 23–91 folds into the LCN-type CS-alpha/beta domain; it reads GNVFPNRELG…FLNALEKQCP (69 aa). 3 disulfide bridges follow: cysteine 37-cysteine 60, cysteine 45-cysteine 70, and cysteine 49-cysteine 72.

Homodimer; disulfide-linked or monomer (edited version) or heterodimer of an alpha chain (AC P84810) and this beta chain (non-edited version). Expressed by the venom gland.

Its subcellular location is the secreted. Functionally, the homodimer inhibits HMG-CoA reductase (HMGCR) (32% of inhibition produced by 0.6 uM), a glycoprotein involved in the control of cholesterol biosynthesis. The inhibitory effects of bumarsin are seen at much lower concentrations (0.6 uM) than that for statins such as atorvastatin (5 mM) and simvastatin (10 uM). In addition to inhibition of HMG-CoA reductase, this protein lowers cholesterol levels by inducing steroid hormone synthesis via StAR, and by increasing reverse cholesterol transport mediated by the induction of ABCA1 and APOA1. Its function is as follows. The heterodimer non-edited LVP1 induces lipolysis in rat adipocytes. Induction of lipolysis by LVP1 appears to be mediated through the beta-2 adrenergic receptor pathway (ADRB2). Intracerebroventricular injection is not toxic to mice. The monomer edited version, similar to alpha-toxins, may modulate voltage-gated sodium channels (Nav) and may block voltage-gated potassium channels (Kv). This Buthus occitanus tunetanus (Common European scorpion) protein is Lipolysis-activating peptide 1-beta chain.